A 1003-amino-acid polypeptide reads, in one-letter code: DNA topoisomerase 3-alpha (1003 aa).

The region spanning 35-179 (KVLCVAEKND…NLRVLRARFS (145 aa)) is the Toprim domain. In terms of domain architecture, Topo IA-type catalytic spans 197 to 617 (DQRVSDAVDV…QQVQKYKQVF (421 aa)). The active-site O-(5'-phospho-DNA)-tyrosine intermediate is the tyrosine 362. The disordered stretch occupies residues 400 to 426 (GGPTPRNGSKSDQAHPPIHPTKYTSGL). A C4-type zinc finger spans residues 658 to 685 (CPQCNKDMVLKTKKSGGFYLSCMGFPEC). 4 residues coordinate Zn(2+): cysteine 815, cysteine 817, cysteine 840, and cysteine 845. The segment at 815-854 (CNCGREAVLLTVRKQGPNQGRHFYKCSNGDCNFFLWADSS) adopts a GRF-type 1 zinc-finger fold. The tract at residues 856–888 (STGGGTPTSASGPPGSSVGCPSSVGSHMDGFGS) is disordered. Low complexity predominate over residues 862 to 888 (PTSASGPPGSSVGCPSSVGSHMDGFGS). Zn(2+) is bound by residues cysteine 899, cysteine 901, cysteine 924, and cysteine 932. The GRF-type 2 zinc finger occupies 899–941 (CLCGQPAVTRTVQKDGPNKGRQFHTCAKPREQQCGFFQWVDEN). The tract at residues 946–991 (SFAAPAWPGGRGKAQRPEAASKRPRAGSSDAGSTVKKPRKCSLCHQ) is disordered.

The protein belongs to the type IA topoisomerase family. As to quaternary structure, binds ssDNA. Interacts (via N-terminal region) with BLM; the interaction is direct. Directly interacts with RMI1. Component of the RMI complex, containing at least TOP3A, RMI1 and RMI2. The RMI complex interacts with BLM. It depends on Mg(2+) as a cofactor. Highly expressed in testis.

Its subcellular location is the mitochondrion matrix. It catalyses the reaction ATP-independent breakage of single-stranded DNA, followed by passage and rejoining.. In terms of biological role, releases the supercoiling and torsional tension of DNA introduced during the DNA replication and transcription by transiently cleaving and rejoining one strand of the DNA duplex. Introduces a single-strand break via transesterification at a target site in duplex DNA. The scissile phosphodiester is attacked by the catalytic tyrosine of the enzyme, resulting in the formation of a DNA-(5'-phosphotyrosyl)-enzyme intermediate and the expulsion of a 3'-OH DNA strand. The free DNA strand then undergoes passage around the unbroken strand thus removing DNA supercoils. Finally, in the religation step, the DNA 3'-OH attacks the covalent intermediate to expel the active-site tyrosine and restore the DNA phosphodiester backbone. As an essential component of the RMI complex it is involved in chromosome separation and the processing of homologous recombination intermediates to limit DNA crossover formation in cells. Has DNA decatenation activity. It is required for mtDNA decatenation and segregation after completion of replication, in a process that does not require BLM, RMI1 and RMI2. This Mus musculus (Mouse) protein is DNA topoisomerase 3-alpha (Top3a).